The primary structure comprises 183 residues: Adenine phosphoribosyltransferase (183 aa).

It belongs to the purine/pyrimidine phosphoribosyltransferase family. In terms of assembly, homodimer.

The protein localises to the cytoplasm. It catalyses the reaction AMP + diphosphate = 5-phospho-alpha-D-ribose 1-diphosphate + adenine. It functions in the pathway purine metabolism; AMP biosynthesis via salvage pathway; AMP from adenine: step 1/1. Catalyzes a salvage reaction resulting in the formation of AMP, that is energically less costly than de novo synthesis. The polypeptide is Adenine phosphoribosyltransferase (Edwardsiella ictaluri (strain 93-146)).